We begin with the raw amino-acid sequence, 365 residues long: Phosphoserine aminotransferase (365 aa).

Position 40 (Arg40) interacts with L-glutamate. Pyridoxal 5'-phosphate is bound by residues 74–75, Phe99, Thr155, Asp177, and Gln200; that span reads AS. The residue at position 201 (Lys201) is an N6-(pyridoxal phosphate)lysine. Pyridoxal 5'-phosphate is bound at residue 241–242; that stretch reads NT.

It belongs to the class-V pyridoxal-phosphate-dependent aminotransferase family. SerC subfamily. In terms of assembly, homodimer. It depends on pyridoxal 5'-phosphate as a cofactor.

It localises to the cytoplasm. The enzyme catalyses O-phospho-L-serine + 2-oxoglutarate = 3-phosphooxypyruvate + L-glutamate. It carries out the reaction 4-(phosphooxy)-L-threonine + 2-oxoglutarate = (R)-3-hydroxy-2-oxo-4-phosphooxybutanoate + L-glutamate. It functions in the pathway amino-acid biosynthesis; L-serine biosynthesis; L-serine from 3-phospho-D-glycerate: step 2/3. Catalyzes the reversible conversion of 3-phosphohydroxypyruvate to phosphoserine and of 3-hydroxy-2-oxo-4-phosphonooxybutanoate to phosphohydroxythreonine. This chain is Phosphoserine aminotransferase, found in Lactococcus lactis subsp. lactis (strain IL1403) (Streptococcus lactis).